Consider the following 42-residue polypeptide: Cytochrome b559 subunit beta (42 aa).

Residues W17 to A33 traverse the membrane as a helical segment. H21 is a binding site for heme.

Belongs to the PsbE/PsbF family. In terms of assembly, heterodimer of an alpha subunit and a beta subunit. PSII is composed of 1 copy each of membrane proteins PsbA, PsbB, PsbC, PsbD, PsbE, PsbF, PsbH, PsbI, PsbJ, PsbK, PsbL, PsbM, PsbT, PsbX, PsbY, PsbZ, Psb30/Ycf12, at least 3 peripheral proteins of the oxygen-evolving complex and a large number of cofactors. It forms dimeric complexes. Requires heme b as cofactor.

The protein resides in the plastid. Its subcellular location is the chloroplast thylakoid membrane. In terms of biological role, this b-type cytochrome is tightly associated with the reaction center of photosystem II (PSII). PSII is a light-driven water:plastoquinone oxidoreductase that uses light energy to abstract electrons from H(2)O, generating O(2) and a proton gradient subsequently used for ATP formation. It consists of a core antenna complex that captures photons, and an electron transfer chain that converts photonic excitation into a charge separation. The polypeptide is Cytochrome b559 subunit beta (Guillardia theta (Cryptophyte)).